Consider the following 141-residue polypeptide: Large ribosomal subunit protein uL11c (141 aa).

It belongs to the universal ribosomal protein uL11 family. Part of the ribosomal stalk of the 50S ribosomal subunit. Interacts with L10 and the large rRNA to form the base of the stalk. L10 forms an elongated spine to which L12 dimers bind in a sequential fashion forming a multimeric L10(L12)X complex.

It is found in the plastid. Its subcellular location is the chloroplast. Its function is as follows. Forms part of the ribosomal stalk which helps the ribosome interact with GTP-bound translation factors. This Thalassiosira pseudonana (Marine diatom) protein is Large ribosomal subunit protein uL11c.